The sequence spans 464 residues: Multifunctional dye peroxidase DyP2 (464 aa).

Asp-203 functions as the Proton acceptor in the catalytic mechanism. Positions 258, 273, and 284 each coordinate Mn(2+). Heme is bound at residue His-321.

The protein belongs to the DyP-type peroxidase family. In terms of assembly, exists both as a monomeric and oligomeric species in solution; the monomeric form contains no bound heme cofactor and is inactive. The cofactor is heme b. Mn(2+) serves as cofactor.

Its subcellular location is the secreted. It catalyses the reaction 1-(4-hydroxy-3-methoxyphenyl)-2-(2-methoxyphenoxy)propane-1,3-diol + H2O2 = guaiacol + vanillin + glycolaldehyde + H2O. It carries out the reaction 2 Mn(2+) + H2O2 + 2 H(+) = 2 Mn(3+) + 2 H2O. The enzyme catalyses 2 a phenolic donor + H2O2 = 2 a phenolic radical donor + 2 H2O. The catalysed reaction is Reactive Blue 5 + 2 H2O2 = 2,2'-disulfonyl azobenzene + 3-[(4-amino-6-chloro-1,3,5-triazin-2-yl)amino]benzenesulfonate + phthalate + 2 H2O + 2 H(+). Functionally, displays both high peroxidase and manganese peroxidase activity. Is likely involved in lignin degradation. Also has a Mn-dependent oxidase mode of action that expands its substrate scope in vitro; is thus able to catalyze the O(2)- and Mn-dependent oxidative decarboxylation of 4-methoxymandelate to anisaldehyde. The protein is Multifunctional dye peroxidase DyP2 of Amycolatopsis sp. (strain ATCC 39116 / 75iv2).